We begin with the raw amino-acid sequence, 199 residues long: MAATAFLVLTYLLGAFPFGLVVALVGRGIDPRLAGSRNTGATNVSRLCGTKLGVLTLVLDLAKGLVPVLCARAMTDSPVFLSMVAVAAVVGHMYSVFLYGKGGKGVATTIGVFLGGAPIPALLSVAVCVAVIRVSGYVSAGSLTLAVALPILCAWLGPVFLVPAAAIIGGLVIHKHRDNIARLRSGQEKSWRKDRAKAA.

The next 5 membrane-spanning stretches (helical) occupy residues 5-25, 51-71, 79-99, 112-132, and 153-173; these read AFLV…VALV, KLGV…VLCA, VFLS…VFLY, VFLG…VAVI, and CAWL…GLVI.

Belongs to the PlsY family. Probably interacts with PlsX.

The protein resides in the cell inner membrane. It carries out the reaction an acyl phosphate + sn-glycerol 3-phosphate = a 1-acyl-sn-glycero-3-phosphate + phosphate. It participates in lipid metabolism; phospholipid metabolism. Catalyzes the transfer of an acyl group from acyl-phosphate (acyl-PO(4)) to glycerol-3-phosphate (G3P) to form lysophosphatidic acid (LPA). This enzyme utilizes acyl-phosphate as fatty acyl donor, but not acyl-CoA or acyl-ACP. In Solidesulfovibrio magneticus (strain ATCC 700980 / DSM 13731 / RS-1) (Desulfovibrio magneticus), this protein is Glycerol-3-phosphate acyltransferase.